Here is a 342-residue protein sequence, read N- to C-terminus: D-erythrose-4-phosphate dehydrogenase (342 aa).

Arg11 to Ile12 serves as a coordination point for NAD(+). Residues Ser153–Thr155, Arg199, Thr212–Lys213, and Arg235 contribute to the substrate site. Cys154 (nucleophile) is an active-site residue. Asn317 lines the NAD(+) pocket.

Belongs to the glyceraldehyde-3-phosphate dehydrogenase family. Epd subfamily. In terms of assembly, homotetramer.

The protein resides in the cytoplasm. The enzyme catalyses D-erythrose 4-phosphate + NAD(+) + H2O = 4-phospho-D-erythronate + NADH + 2 H(+). It participates in cofactor biosynthesis; pyridoxine 5'-phosphate biosynthesis; pyridoxine 5'-phosphate from D-erythrose 4-phosphate: step 1/5. Functionally, catalyzes the NAD-dependent conversion of D-erythrose 4-phosphate to 4-phosphoerythronate. In Shewanella denitrificans (strain OS217 / ATCC BAA-1090 / DSM 15013), this protein is D-erythrose-4-phosphate dehydrogenase.